The following is a 115-amino-acid chain: Small ribosomal subunit protein bS6 (115 aa).

Belongs to the bacterial ribosomal protein bS6 family.

In terms of biological role, binds together with bS18 to 16S ribosomal RNA. The protein is Small ribosomal subunit protein bS6 of Syntrophotalea carbinolica (strain DSM 2380 / NBRC 103641 / GraBd1) (Pelobacter carbinolicus).